Here is a 564-residue protein sequence, read N- to C-terminus: DNA ligase (564 aa).

E234 is an ATP binding site. The active-site N6-AMP-lysine intermediate is K236. The ATP site is built by R241, R256, E288, and F323. E288 contacts a divalent metal cation. E383 is a binding site for a divalent metal cation. Residues R399 and K403 each contribute to the ATP site.

It belongs to the ATP-dependent DNA ligase family. Requires a divalent metal cation as cofactor.

The catalysed reaction is ATP + (deoxyribonucleotide)n-3'-hydroxyl + 5'-phospho-(deoxyribonucleotide)m = (deoxyribonucleotide)n+m + AMP + diphosphate.. In terms of biological role, DNA ligase that seals nicks in double-stranded DNA during DNA replication, DNA recombination and DNA repair. It is not essential for viral replication and recombination. This Vertebrata (FPV) protein is DNA ligase (LIG).